We begin with the raw amino-acid sequence, 244 residues long: Phosphoadenosine 5'-phosphosulfate reductase (244 aa).

Catalysis depends on cysteine 239, which acts as the Nucleophile; cysteine thiosulfonate intermediate.

Belongs to the PAPS reductase family. CysH subfamily.

The protein resides in the cytoplasm. The catalysed reaction is [thioredoxin]-disulfide + sulfite + adenosine 3',5'-bisphosphate + 2 H(+) = [thioredoxin]-dithiol + 3'-phosphoadenylyl sulfate. Its pathway is sulfur metabolism; hydrogen sulfide biosynthesis; sulfite from sulfate: step 3/3. Functionally, catalyzes the formation of sulfite from phosphoadenosine 5'-phosphosulfate (PAPS) using thioredoxin as an electron donor. In Cronobacter sakazakii (strain ATCC BAA-894) (Enterobacter sakazakii), this protein is Phosphoadenosine 5'-phosphosulfate reductase.